Here is an 88-residue protein sequence, read N- to C-terminus: MADSDPGERSYDNMLKMLSDLNKDLEKLLEEMEKISVQATWMAYDMVVMRTNPTLAESMRRLEDAFLNCKEEMEKNWQELLTETKRKQ.

Residues 8–75 (ERSYDNMLKM…FLNCKEEMEK (68 aa)) adopt a coiled-coil conformation.

Homodimer. Can form higher-order homooligomers. Interacts with SYCP1 (via tetrameric core); the interaction remodels SYCP1 homotetramers to 2:1 heterotrimers with SYCE3. SYCP1/SYCE3 heterotrimers form lattice assemblies as part of the mature synaptonemal complex via both lateral and head-to-head interactions. Interacts with the SYCE1-SIX6OS1 complex; the interaction recruits the SYCE1-SIX6OS1 complex to the central element of the synaptonemal complex. Interacts with the SYCE2-TEX12 complex; the interaction promotes fibrous assembly of SYCE2-TEX12 as part of the synaptonemal complex central element. Interacts with SYCE1. Interacts with SYCE2. Interacts with proteasome subunit PSMA8; to participate in meiosis progression during spermatogenesis. Interacts with SPO16. In terms of tissue distribution, expression is restricted to spermatocytes and is absent in spermatogonia, spermatids and spermatogonia (at protein level). Expressed in adult testis and embryonic ovary. Expressed in the convoluted seminiferous tubules in spermatogonia and spermatocytes.

It localises to the nucleus. It is found in the chromosome. Functionally, major component of the transverse central element of synaptonemal complexes (SCS), formed between homologous chromosomes during meiotic prophase. Required for the assembly of the central element of the synaptonemal complex during meiosis, via remodeling of SYCP1 lattice structures and promoting recruitment of SYCE2-TEX12 and SYCE1-SIX60S1 complexes. Required for chromosome loading of the central element-specific SCS proteins, and for initiating synapsis between homologous chromosomes. Chromosome loading appears to require SYCP1. Required for fertility and normal testis development. May play a role in apoptosis of spermatogenic cells and pathogenesis of cryptorchidism. The chain is Synaptonemal complex central element protein 3 from Mus musculus (Mouse).